We begin with the raw amino-acid sequence, 309 residues long: Testis-expressed protein 264 homolog (309 aa).

Residues 1-3 (MPD) lie on the Lumenal side of the membrane. Residues 4–24 (LLLLGLIGALTLLLLLTLLAF) form a helical; Signal-anchor for type III membrane protein membrane-spanning segment. Topologically, residues 25-309 (AGYSGLLTGV…ELSTPERGEE (285 aa)) are cytoplasmic. Residues 193–309 (PEVKETERKC…ELSTPERGEE (117 aa)) are disordered. The segment covering 208–225 (ATDTQTDGTGADTSDASS) has biased composition (low complexity). Residues Ser-238 and Ser-243 each carry the phosphoserine modification. Basic and acidic residues predominate over residues 250–262 (GWDDGDNRSEHSY). The segment covering 263 to 272 (SESGASGSSF) has biased composition (low complexity). An LIR motif motif is present at residues 272-275 (FEEL).

As to quaternary structure, interacts (via the LIR motif) with ATG8 family proteins MAP1LC3A, MAP1LC3B, GABARAP and GABARAPL1. Interacts with VCP/p97; bridging VCP/p97 to covalent DNA-protein cross-links (DPCs). Interacts with TOP1 (when sumoylated).

The protein resides in the endoplasmic reticulum membrane. It localises to the cytoplasmic vesicle. Its subcellular location is the autophagosome. The protein localises to the cytoplasm. It is found in the cytosol. The protein resides in the nucleus. It localises to the chromosome. In terms of biological role, major reticulophagy (also called ER-phagy) receptor that acts independently of other candidate reticulophagy receptors to remodel subdomains of the endoplasmic reticulum into autophagosomes upon nutrient stress, which then fuse with lysosomes for endoplasmic reticulum turnover. The ATG8-containing isolation membrane (IM) cradles a tubular segment of TEX264-positive ER near a three-way junction, allowing the formation of a synapse of 2 juxtaposed membranes with trans interaction between the TEX264 and ATG8 proteins. Expansion of the IM would extend the capture of ER, possibly through a 'zipper-like' process involving continued trans TEX264-ATG8 interactions, until poorly understood mechanisms lead to the fission of relevant membranes and, ultimately, autophagosomal membrane closure. Also involved in the repair of covalent DNA-protein cross-links (DPCs) during DNA synthesis: acts by bridging VCP/p97 to covalent DNA-protein cross-links (DPCs) and initiating resolution of DPCs by SPRTN. The chain is Testis-expressed protein 264 homolog from Mus musculus (Mouse).